Here is a 241-residue protein sequence, read N- to C-terminus: MLTKTMGNFFTEVKDTGLLQSEQLHQYILDTSVFPRESEHLKELRKATESHPMSFMGTSPLAGQLLSFMLKTVKPKKTIEVGVFTGYSLLATALSIPDDGKITAVDIDREAYNVGLALIKKAGVESKISFIVSDAMTLLDDLLADGRYQGSYDFAFVDADKTNYVNYHERLIELVKVGGIIAYDNTLWGGTVALPESEVPDFMKNNWVCVTKLNEILGSDARIDIAHLPVGDGITFCRRVY.

Lys-14 is a substrate binding site. S-adenosyl-L-methionine contacts are provided by residues Thr-58, Glu-80, 82–83 (GV), Ser-88, Asp-106, and Ala-135. Asp-158 is a binding site for substrate. Position 158 (Asp-158) interacts with a divalent metal cation. Asp-160 provides a ligand contact to S-adenosyl-L-methionine. Asp-184 and Asn-185 together coordinate a divalent metal cation.

This sequence belongs to the class I-like SAM-binding methyltransferase superfamily. Cation-dependent O-methyltransferase family. CCoAMT subfamily. It depends on a divalent metal cation as a cofactor.

The catalysed reaction is (E)-caffeoyl-CoA + S-adenosyl-L-methionine = (E)-feruloyl-CoA + S-adenosyl-L-homocysteine + H(+). The protein operates within aromatic compound metabolism; phenylpropanoid biosynthesis. Its function is as follows. Methylates caffeoyl-CoA to feruloyl-CoA and 5-hydroxyferuloyl-CoA to sinapoyl-CoA. Plays a role in the synthesis of feruloylated polysaccharides. Involved in the reinforcement of the plant cell wall. Also involved in the responding to wounding or pathogen challenge by the increased formation of cell wall-bound ferulic acid polymers. The chain is Caffeoyl-CoA O-methyltransferase from Stellaria longipes (Longstalk starwort).